The following is a 101-amino-acid chain: NADH-quinone oxidoreductase subunit K (101 aa).

Helical transmembrane passes span 5 to 25, 30 to 50, and 61 to 81; these read LTHY…GIIL, IVIL…LVAF, and VLVF…LALI.

Belongs to the complex I subunit 4L family. NDH-1 is composed of 14 different subunits. Subunits NuoA, H, J, K, L, M, N constitute the membrane sector of the complex.

The protein localises to the cell inner membrane. It catalyses the reaction a quinone + NADH + 5 H(+)(in) = a quinol + NAD(+) + 4 H(+)(out). In terms of biological role, NDH-1 shuttles electrons from NADH, via FMN and iron-sulfur (Fe-S) centers, to quinones in the respiratory chain. The immediate electron acceptor for the enzyme in this species is believed to be ubiquinone. Couples the redox reaction to proton translocation (for every two electrons transferred, four hydrogen ions are translocated across the cytoplasmic membrane), and thus conserves the redox energy in a proton gradient. The protein is NADH-quinone oxidoreductase subunit K of Methylacidiphilum infernorum (isolate V4) (Methylokorus infernorum (strain V4)).